A 107-amino-acid chain; its full sequence is uncharacterized protein (107 aa).

Residues 25 to 42 form a helical membrane-spanning segment; it reads LSLCSVLLSWLICAMCLW.

The protein localises to the host membrane. This is an uncharacterized protein from Galliformes (FAdV-1).